The chain runs to 361 residues: MTRAFNFSAGPATLPESVLRQAQAEMVEWNGVGASIVEISHRSADFMAVAAAAEADLRSLLSIPDDYAVMFTAGGATTIQALLPLNFAAPGQAADYVITGHWGKTAIKQASPYVDARIAADAETGGFLDIPPAASWTLSPHSAYVHITANETIHGVEFRDTPEVGTLPLFADFSSSIASEPLDISRYGLIYAGAQKNLGPVGISVVIVRRDLLERAGQPRADIFNYASHVARDSMLNTPPTWNWYLLGLTVKWMLEQGGVQEFARRNAEKAALVYGAIDGAGGFYRNLITPAVRSRMNIPFFLPDEQLDALFVSESKAAGLLALKGHKAVGGIRASLYNAMPLAGAQALANFMHDFQQRHG.

Arginine 42 serves as a coordination point for L-glutamate. Residues alanine 76–threonine 77, tryptophan 102, threonine 152, aspartate 172, and glutamine 195 each bind pyridoxal 5'-phosphate. At lysine 196 the chain carries N6-(pyridoxal phosphate)lysine. A pyridoxal 5'-phosphate-binding site is contributed by asparagine 237–threonine 238.

Belongs to the class-V pyridoxal-phosphate-dependent aminotransferase family. SerC subfamily. Homodimer. It depends on pyridoxal 5'-phosphate as a cofactor.

The protein localises to the cytoplasm. The enzyme catalyses O-phospho-L-serine + 2-oxoglutarate = 3-phosphooxypyruvate + L-glutamate. The catalysed reaction is 4-(phosphooxy)-L-threonine + 2-oxoglutarate = (R)-3-hydroxy-2-oxo-4-phosphooxybutanoate + L-glutamate. Its pathway is amino-acid biosynthesis; L-serine biosynthesis; L-serine from 3-phospho-D-glycerate: step 2/3. It participates in cofactor biosynthesis; pyridoxine 5'-phosphate biosynthesis; pyridoxine 5'-phosphate from D-erythrose 4-phosphate: step 3/5. Catalyzes the reversible conversion of 3-phosphohydroxypyruvate to phosphoserine and of 3-hydroxy-2-oxo-4-phosphonooxybutanoate to phosphohydroxythreonine. This chain is Phosphoserine aminotransferase, found in Xanthomonas oryzae pv. oryzae (strain MAFF 311018).